Here is a 223-residue protein sequence, read N- to C-terminus: Deoxyribose-phosphate aldolase 1 (223 aa).

The Proton donor/acceptor role is filled by aspartate 91. The active-site Schiff-base intermediate with acetaldehyde is the lysine 153. Lysine 182 serves as the catalytic Proton donor/acceptor.

This sequence belongs to the DeoC/FbaB aldolase family. DeoC type 1 subfamily.

Its subcellular location is the cytoplasm. The enzyme catalyses 2-deoxy-D-ribose 5-phosphate = D-glyceraldehyde 3-phosphate + acetaldehyde. The protein operates within carbohydrate degradation; 2-deoxy-D-ribose 1-phosphate degradation; D-glyceraldehyde 3-phosphate and acetaldehyde from 2-deoxy-alpha-D-ribose 1-phosphate: step 2/2. Its function is as follows. Catalyzes a reversible aldol reaction between acetaldehyde and D-glyceraldehyde 3-phosphate to generate 2-deoxy-D-ribose 5-phosphate. The sequence is that of Deoxyribose-phosphate aldolase 1 from Yersinia pestis.